Reading from the N-terminus, the 131-residue chain is Large-conductance mechanosensitive channel (131 aa).

The next 2 membrane-spanning stretches (helical) occupy residues 14–34 (VMDMAVGIIIGAAFTAIVTSL) and 71–91 (GNFIMAVINFLIIAWVVFLLV).

It belongs to the MscL family. Homopentamer.

The protein resides in the cell inner membrane. In terms of biological role, channel that opens in response to stretch forces in the membrane lipid bilayer. May participate in the regulation of osmotic pressure changes within the cell. The sequence is that of Large-conductance mechanosensitive channel from Dinoroseobacter shibae (strain DSM 16493 / NCIMB 14021 / DFL 12).